We begin with the raw amino-acid sequence, 361 residues long: 3-dehydroquinate synthase (361 aa).

NAD(+) is bound by residues 105 to 109 (GVIGD), 129 to 130 (TT), K142, K151, and 169 to 172 (FLST). Positions 184, 247, and 264 each coordinate Zn(2+).

This sequence belongs to the sugar phosphate cyclases superfamily. Dehydroquinate synthase family. Requires Co(2+) as cofactor. Zn(2+) serves as cofactor. The cofactor is NAD(+).

The protein localises to the cytoplasm. The catalysed reaction is 7-phospho-2-dehydro-3-deoxy-D-arabino-heptonate = 3-dehydroquinate + phosphate. The protein operates within metabolic intermediate biosynthesis; chorismate biosynthesis; chorismate from D-erythrose 4-phosphate and phosphoenolpyruvate: step 2/7. Functionally, catalyzes the conversion of 3-deoxy-D-arabino-heptulosonate 7-phosphate (DAHP) to dehydroquinate (DHQ). The sequence is that of 3-dehydroquinate synthase from Endomicrobium trichonymphae.